The chain runs to 2715 residues: Teneurin-3 (2715 aa).

Disordered regions lie at residues 1-38 (MDVK…VPTQ) and 142-223 (GRSS…AALP). One can recognise a Teneurin N-terminal domain in the interval 1 to 309 (MDVKERRPYC…KSSKYCSWRC (309 aa)). At 1–310 (MDVKERRPYC…SSKYCSWRCT (310 aa)) the chain is on the cytoplasmic side. Residues 142-153 (GRSSCLSSRSNS) are compositionally biased toward low complexity. The span at 159-168 (DTEHENRSDS) shows a compositional bias: basic and acidic residues. A compositionally biased stretch (polar residues) spans 171–182 (EQPSNNPGQPTL). The segment covering 201 to 213 (TSLNRNSLTNRRN) has biased composition (low complexity). Residues 311 to 331 (ALCAVGVSVLLAILLSYFIAM) form a helical membrane-spanning segment. Residues 332–2715 (HLFGLNWHLQ…FLRQSEIGKR (2384 aa)) lie on the Extracellular side of the membrane. Residues Asn345, Asn380, and Asn419 are each glycosylated (N-linked (GlcNAc...) asparagine). EGF-like domains lie at 514 to 545 (SVVE…PDCS), 546 to 576 (RAAC…TECD), 578 to 610 (PTTQ…ENCE), 611 to 642 (EADC…SNCE), 644 to 677 (LKTM…PDCS), 678 to 709 (NEIC…ACNQ), 710 to 739 (RACH…EHCT), and 740 to 783 (IAHY…AGCD). 22 disulfide bridges follow: Cys518–Cys528, Cys522–Cys533, Cys535–Cys544, Cys553–Cys564, Cys566–Cys575, Cys582–Cys593, Cys587–Cys598, Cys600–Cys609, Cys614–Cys625, Cys619–Cys630, Cys632–Cys641, Cys652–Cys665, Cys667–Cys676, Cys681–Cys691, Cys685–Cys696, Cys698–Cys707, Cys712–Cys722, Cys716–Cys727, Cys729–Cys738, Cys752–Cys762, Cys756–Cys771, and Cys773–Cys782. Asn670 carries an N-linked (GlcNAc...) asparagine glycan. Asn869 and Asn892 each carry an N-linked (GlcNAc...) asparagine glycan. An NHL 1 repeat occupies 1181–1209 (LLAPVALACGIDGSLYVGDFNYVRRIFPS). An N-linked (GlcNAc...) asparagine glycan is attached at Asn1211. NHL repeat units lie at residues 1216–1260 (LELR…PKSL), 1286–1330 (ARCG…NGII), 1347–1387 (CDTS…ITEN), 1418–1445 (LESA…INRI), and 1474–1517 (CYQS…VSKN). The YD 1 repeat unit spans residues 1527–1546 (YEVASPTDQELYIFDINGTH). N-linked (GlcNAc...) asparagine glycosylation is found at Asn1543 and Asn1560. YD repeat units lie at residues 1563–1583 (YSND…LRIR), 1626–1645 (YHGN…WTTF), and 1646–1668 (FDYD…TNLH). N-linked (GlcNAc...) asparagine glycosylation is found at Asn1656, Asn1693, Asn1751, and Asn1836. YD repeat units lie at residues 1839 to 1858 (YSST…EKVD), 1880 to 1898 (YLEK…YIFE), 1899 to 1919 (YDMW…HTMQ), 1926 to 1943 (YYRN…IITD), 1944 to 1965 (YNEE…VLFK), 1966 to 1983 (YRRQ…TRVS), 1986 to 2006 (YDET…FICT), 2009 to 2029 (YRQI…DGMV), 2037 to 2056 (YDNS…TPLP), 2062 to 2079 (FDDI…GVIY), 2080 to 2106 (YDIN…IKEI), 2108 to 2121 (YEIF…ITIQ), 2122 to 2145 (YDNM…TKYA), 2148 to 2168 (YDVD…WRYN), 2169 to 2189 (YDLN…LTPL), 2191 to 2211 (YDLR…DEDG), 2223 to 2243 (YSSK…TVIY), and 2245 to 2265 (YDGL…LQFF). Asn1937 carries N-linked (GlcNAc...) asparagine glycosylation. Residue Asn2140 is glycosylated (N-linked (GlcNAc...) asparagine). A glycan (N-linked (GlcNAc...) asparagine) is linked at Asn2280. The YD 23 repeat unit spans residues 2291–2332 (YDLQGHLFAMEISSGDEFYIASDNTGTPLAVFSSNGLMLKQT). Residue Asn2592 is glycosylated (N-linked (GlcNAc...) asparagine).

The protein belongs to the tenascin family. Teneurin subfamily. In terms of assembly, homodimer; disulfide-linked; to mediate homophilic cell adhesion. Most isoforms (isoform-type A and type-B) can mediate homophilic interaction. Heterodimer with either TENM1 or TENM2. May also form heterodimer with TENM4. Isoform A0B0: Does not form homodimer to mediate homophilic cell adhesion. Isoform A0B0: Heterodimer with ADGRL3. In brain, expressed in highly specific regions of the postnatal brain: expressed in restricted domains of the developing hippocampal region, including proximal CA1, distal subiculum, and medial entorhinal cortex (at protein level). Expression matches with topographic connectivity between entorhinal cortex, CA1, and subiculum (at protein level). Also specifically expressed in subregions of the presubiculum, parasubiculum, medial mammillary nucleus and anteroventral thalamic nucleus that are topographically connected with subiculum or entorhinal cortex (at protein level). Expressed in neurons of the developing visual pathway (at protein level). Expressed in the dorsal and ventral lateral geniculate nucleus (dLGN and vLGN) and optic tract at birth. Expressed in ipsilateral retinal axons of terminal zones (TZs) in the developing superior colliculus (SC) throughout the first postnatal week. Expressed in the layer V of the visual caudal cortex. Expressed in the femoral and mandibular condylar cartilages. Strongly expressed in fibrous and proliferating chondrocytes. Poorly expressed in mature chondrocytes. Not expressed in hypertrophic chondrocytes.

It localises to the cell membrane. The protein localises to the cell projection. The protein resides in the axon. Its function is as follows. Involved in neural development by regulating the establishment of proper connectivity within the nervous system. Acts in both pre- and postsynaptic neurons in the hippocampus to control the assembly of a precise topographic projection: required in both CA1 and subicular neurons for the precise targeting of proximal CA1 axons to distal subiculum, probably by promoting homophilic cell adhesion. Promotes homophilic adhesion in a splicing isoform-dependent manner: most isoforms (isoform-type A and type-B) can mediate homophilic interaction. Promotes axon guidance. Required for proper dendrite morphogenesis and axon targeting in the vertebrate visual system, thereby playing a key role in the development of the visual pathway. Regulates the formation in ipsilateral retinal mapping to both the dorsal lateral geniculate nucleus (dLGN) and the superior colliculus (SC). May also be involved in the differentiation of the fibroblast-like cells in the superficial layer of mandibular condylar cartilage into chondrocytes. The polypeptide is Teneurin-3 (Mus musculus (Mouse)).